The primary structure comprises 177 residues: MNIPQPVSLNIDALFRNLATGLNQRMAEQERNKPAMIGIHTGGVWVAERLLNQLDNLVSDPLGVLNIAYYRDDFTRIGMHPQVQPSQLPFSVADRHIILVDDVLYTGRTVRAALNEIFDYGRPASVTLAALVERAGRELPIQADVVGHHLDLAPNEQVKLTGPDPLQFSIQYIDPTE.

Residues 97–109 carry the PRPP-binding motif; it reads IILVDDVLYTGRT.

This sequence belongs to the purine/pyrimidine phosphoribosyltransferase family. PyrR subfamily.

The enzyme catalyses UMP + diphosphate = 5-phospho-alpha-D-ribose 1-diphosphate + uracil. Its function is as follows. Regulates the transcription of the pyrimidine nucleotide (pyr) operon in response to exogenous pyrimidines. Functionally, also displays a weak uracil phosphoribosyltransferase activity which is not physiologically significant. In Nitrosococcus oceani (strain ATCC 19707 / BCRC 17464 / JCM 30415 / NCIMB 11848 / C-107), this protein is Bifunctional protein PyrR.